Consider the following 306-residue polypeptide: Porphobilinogen deaminase (306 aa).

S-(dipyrrolylmethanemethyl)cysteine is present on cysteine 239.

It belongs to the HMBS family. In terms of assembly, monomer. It depends on dipyrromethane as a cofactor.

It catalyses the reaction 4 porphobilinogen + H2O = hydroxymethylbilane + 4 NH4(+). It functions in the pathway porphyrin-containing compound metabolism; protoporphyrin-IX biosynthesis; coproporphyrinogen-III from 5-aminolevulinate: step 2/4. In terms of biological role, tetrapolymerization of the monopyrrole PBG into the hydroxymethylbilane pre-uroporphyrinogen in several discrete steps. In Helicobacter pylori (strain HPAG1), this protein is Porphobilinogen deaminase.